Consider the following 96-residue polypeptide: DNA-directed RNA polymerase subunit Rpo11 (96 aa).

This sequence belongs to the archaeal Rpo11/eukaryotic RPB11/RPC19 RNA polymerase subunit family. As to quaternary structure, part of the RNA polymerase complex.

Its subcellular location is the cytoplasm. It catalyses the reaction RNA(n) + a ribonucleoside 5'-triphosphate = RNA(n+1) + diphosphate. Functionally, DNA-dependent RNA polymerase (RNAP) catalyzes the transcription of DNA into RNA using the four ribonucleoside triphosphates as substrates. The chain is DNA-directed RNA polymerase subunit Rpo11 from Methanococcus maripaludis (strain C6 / ATCC BAA-1332).